The sequence spans 203 residues: Snake venom metalloproteinase atroxase (203 aa).

Glutamate 1 carries the pyrrolidone carboxylic acid (Glu) modification. N-linked (GlcNAc...) asparagine glycosylation is present at asparagine 5. In terms of domain architecture, Peptidase M12B spans arginine 9–lysine 203. Residues glutamate 12 and aspartate 96 each contribute to the Ca(2+) site. Histidine 145 is a Zn(2+) binding site. Glutamate 146 is an active-site residue. Histidine 149 and histidine 155 together coordinate Zn(2+). Cysteine 160 and cysteine 167 form a disulfide bridge. Asparagine 202 provides a ligand contact to Ca(2+).

This sequence belongs to the venom metalloproteinase (M12B) family. P-I subfamily. As to quaternary structure, monomer. It depends on Zn(2+) as a cofactor. The N-terminus is blocked. As to expression, expressed by the venom gland.

The protein localises to the secreted. The enzyme catalyses Cleavage of 5-His-|-Leu-6, 9-Ser-|-His-10, 10-His-|-Leu-11, 14-Ala-|-Leu-15 and 16-Tyr-|-Leu-17 in insulin B chain.. Its activity is regulated as follows. Inhibited by EDTA and alpha2-macroglobulin. In terms of biological role, snake venom zinc metalloprotease that has Aalpha, Bbeta fibrin(ogen)olytic activities. It cleaves the Aalpha chain of fibrinogen first followed by the Bbeta chain and shows no effect on the gamma chain. Does not induce or inhibit platelet aggregation, and is unable to activate plasminogen. Exhibits low lethality when tested on mice. Intravenous administration results in thrombolysis within one hour followed by recanalization. Fibrinogenolytic activity results in a 60% decrease in the rat's plasma fibrinogen level. Histological examination of kidney, liver, heart and lung tissue shows no necrosis nor hemorrhage. This chain is Snake venom metalloproteinase atroxase, found in Crotalus atrox (Western diamondback rattlesnake).